The chain runs to 66 residues: Large ribosomal subunit protein bL35 (66 aa).

It belongs to the bacterial ribosomal protein bL35 family.

The polypeptide is Large ribosomal subunit protein bL35 (Treponema pallidum (strain Nichols)).